The primary structure comprises 150 residues: UPF0540 protein At1g62080 (150 aa).

An N-terminal signal peptide occupies residues 1-21; that stretch reads MNATKFLVLLVIGVLCAIVTA. Low complexity predominate over residues 119 to 135; the sequence is AAAARAKGKVASASRVK. The interval 119-150 is disordered; that stretch reads AAAARAKGKVASASRVKGSSEKKKKDRKGKKD.

It belongs to the UPF0540 family.

The polypeptide is UPF0540 protein At1g62080 (Arabidopsis thaliana (Mouse-ear cress)).